The sequence spans 570 residues: Nucleoprotein (570 aa).

Residues 54 to 241 (MRKQKRDDGD…IDTKKSSLNI (188 aa)) are binding site for the cap structure m7GTP. Residues D390 and E392 each coordinate Mn(2+). Residues E400, C507, H510, and C530 each coordinate Zn(2+). D534 lines the Mn(2+) pocket.

This sequence belongs to the arenaviridae nucleocapsid protein family. As to quaternary structure, homomultimerizes to form the nucleocapsid. Binds to viral genomic RNA. Interacts with glycoprotein G2. Interacts with protein Z; this interaction probably directs the encapsidated genome to budding sites. Interacts with protein L; this interaction does not interfere with Z-L interaction. Interacts with host IKBKE (via Protein kinase domain); the interaction inhibits IKBKE kinase activity.

It localises to the virion. The protein resides in the host cytoplasm. Encapsidates the genome, protecting it from nucleases. The encapsidated genomic RNA is termed the nucleocapsid (NC). Serves as template for viral transcription and replication. The increased presence of protein N in host cell does not seem to trigger the switch from transcription to replication as observed in other negative strain RNA viruses. Through the interaction with host IKBKE, strongly inhibits the phosphorylation and nuclear translocation of host IRF3, a protein involved in interferon activation pathway, leading to the inhibition of interferon-beta and IRF3-dependent promoters activation. Also encodes a functional 3'-5' exoribonuclease that degrades preferentially dsRNA substrates and thereby participates in the suppression of interferon induction. The chain is Nucleoprotein from Homo sapiens (Human).